The following is a 307-amino-acid chain: Probable inactive peptidyl-prolyl cis-trans isomerase-like 6 (307 aa).

The PPIase cyclophilin-type domain occupies F141 to Q304.

This sequence belongs to the cyclophilin-type PPIase family.

Its function is as follows. Probable inactive PPIase with no peptidyl-prolyl cis-trans isomerase activity. The chain is Probable inactive peptidyl-prolyl cis-trans isomerase-like 6 from Bos taurus (Bovine).